Consider the following 261-residue polypeptide: MARKPLIAGNWKMNLNHLEAIALVQKIAFALPEKYFEKVDVAVIPPFVDIRSVQTLVEGDKLLLTYGAQDVSVHESGAYTGEISASMLAKLGCTFVVVGHSERRQYHHEDDATVLGKAKKALEHGLTPIVCIGEGLNVREAGTHVEYNLEQLRGSLKGLSAEQIAKVVIAYEPVWAIGTGKVASAADAQEVCGAIRAELAELAGPEVAAQVRVLYGGSVNAKNVGELVAQPDVDGALVGGASLKGDEFATLSAIAAGGPLP.

Position 10–12 (10–12) interacts with substrate; that stretch reads NWK. Histidine 100 (electrophile) is an active-site residue. The active-site Proton acceptor is the glutamate 172. Residues glycine 178, serine 218, and 239 to 240 each bind substrate; that span reads GG.

Belongs to the triosephosphate isomerase family. Homodimer.

It is found in the cytoplasm. The catalysed reaction is D-glyceraldehyde 3-phosphate = dihydroxyacetone phosphate. Its pathway is carbohydrate biosynthesis; gluconeogenesis. It functions in the pathway carbohydrate degradation; glycolysis; D-glyceraldehyde 3-phosphate from glycerone phosphate: step 1/1. Its function is as follows. Involved in the gluconeogenesis. Catalyzes stereospecifically the conversion of dihydroxyacetone phosphate (DHAP) to D-glyceraldehyde-3-phosphate (G3P). The protein is Triosephosphate isomerase of Nocardia farcinica (strain IFM 10152).